A 162-amino-acid polypeptide reads, in one-letter code: uncharacterized protein (162 aa).

Residues 7–27 (LGGVMLFAIVSLMVCGCMVVF) traverse the membrane as a helical segment.

It localises to the membrane. This is an uncharacterized protein from Methanocaldococcus jannaschii (strain ATCC 43067 / DSM 2661 / JAL-1 / JCM 10045 / NBRC 100440) (Methanococcus jannaschii).